The primary structure comprises 309 residues: GTP cyclohydrolase FolE2 (309 aa).

Belongs to the GTP cyclohydrolase IV family.

It carries out the reaction GTP + H2O = 7,8-dihydroneopterin 3'-triphosphate + formate + H(+). It functions in the pathway cofactor biosynthesis; 7,8-dihydroneopterin triphosphate biosynthesis; 7,8-dihydroneopterin triphosphate from GTP: step 1/1. Functionally, converts GTP to 7,8-dihydroneopterin triphosphate. The polypeptide is GTP cyclohydrolase FolE2 (Serratia proteamaculans (strain 568)).